The chain runs to 240 residues: 4-hydroxy-tetrahydrodipicolinate reductase (240 aa).

NAD(+) contacts are provided by residues 79–81 (ATT) and 103–106 (SANM). The active-site Proton donor/acceptor is the H135. (S)-2,3,4,5-tetrahydrodipicolinate is bound at residue H136. The Proton donor role is filled by K139. 145 to 146 (GT) is a binding site for (S)-2,3,4,5-tetrahydrodipicolinate.

This sequence belongs to the DapB family.

Its subcellular location is the cytoplasm. It carries out the reaction (S)-2,3,4,5-tetrahydrodipicolinate + NAD(+) + H2O = (2S,4S)-4-hydroxy-2,3,4,5-tetrahydrodipicolinate + NADH + H(+). It catalyses the reaction (S)-2,3,4,5-tetrahydrodipicolinate + NADP(+) + H2O = (2S,4S)-4-hydroxy-2,3,4,5-tetrahydrodipicolinate + NADPH + H(+). Its pathway is amino-acid biosynthesis; L-lysine biosynthesis via DAP pathway; (S)-tetrahydrodipicolinate from L-aspartate: step 4/4. Catalyzes the conversion of 4-hydroxy-tetrahydrodipicolinate (HTPA) to tetrahydrodipicolinate. The chain is 4-hydroxy-tetrahydrodipicolinate reductase from Staphylococcus aureus (strain USA300).